The following is a 225-amino-acid chain: ATP-dependent dethiobiotin synthetase BioD (225 aa).

12-17 (EVGKTY) serves as a coordination point for ATP. Threonine 16 contributes to the Mg(2+) binding site. Lysine 37 is an active-site residue. Serine 41 contacts substrate. ATP is bound by residues aspartate 52, 114-117 (EGAG), and 174-175 (NC). Mg(2+)-binding residues include aspartate 52 and glutamate 114.

The protein belongs to the dethiobiotin synthetase family. As to quaternary structure, homodimer. The cofactor is Mg(2+).

The protein resides in the cytoplasm. The enzyme catalyses (7R,8S)-7,8-diammoniononanoate + CO2 + ATP = (4R,5S)-dethiobiotin + ADP + phosphate + 3 H(+). It functions in the pathway cofactor biosynthesis; biotin biosynthesis; biotin from 7,8-diaminononanoate: step 1/2. Functionally, catalyzes a mechanistically unusual reaction, the ATP-dependent insertion of CO2 between the N7 and N8 nitrogen atoms of 7,8-diaminopelargonic acid (DAPA, also called 7,8-diammoniononanoate) to form a ureido ring. The protein is ATP-dependent dethiobiotin synthetase BioD of Francisella tularensis subsp. novicida (strain U112).